A 277-amino-acid polypeptide reads, in one-letter code: Ribonuclease HII (277 aa).

Positions 20–250 (KLIIGLDEAG…SKKLLKKIED (231 aa)) constitute an RNase H type-2 domain. A divalent metal cation contacts are provided by D26, E27, and D141.

Belongs to the RNase HII family. It depends on Mn(2+) as a cofactor. Mg(2+) is required as a cofactor.

The protein localises to the cytoplasm. The catalysed reaction is Endonucleolytic cleavage to 5'-phosphomonoester.. In terms of biological role, endonuclease that specifically degrades the RNA of RNA-DNA hybrids. This is Ribonuclease HII from Methanococcus aeolicus (strain ATCC BAA-1280 / DSM 17508 / OCM 812 / Nankai-3).